A 293-amino-acid polypeptide reads, in one-letter code: DOMON domain-containing protein FRRS1L (293 aa).

A signal peptide spans 1 to 28 (MARPPRQHPGVWASLLLLLLTGPAACAA). A disordered region spans residues 29-61 (SPADDGAGPGGRGPRGRARGDTGADEAVPRHDS). Residues 46-61 (ARGDTGADEAVPRHDS) are compositionally biased toward basic and acidic residues. The region spanning 119–234 (CDYFLSYRMI…WYYLFAWGPA (116 aa)) is the DOMON domain. Residues 271-291 (TFSSPFCLLLIVALTFYLLMG) traverse the membrane as a helical segment.

As to quaternary structure, component of the outer core of AMPAR complex. AMPAR complex consists of an inner core made of 4 pore-forming GluA/GRIA proteins (GRIA1, GRIA2, GRIA3 and GRIA4) and 4 major auxiliary subunits arranged in a twofold symmetry. One of the two pairs of distinct binding sites is occupied either by CNIH2, CNIH3 or CACNG2, CACNG3. The other harbors CACNG2, CACNG3, CACNG4, CACNG8 or GSG1L. This inner core of AMPAR complex is complemented by outer core constituents binding directly to the GluA/GRIA proteins at sites distinct from the interaction sites of the inner core constituents. Outer core constituents include at least PRRT1, PRRT2, CKAMP44/SHISA9, FRRS1L and NRN1. The proteins of the inner and outer core serve as a platform for other, more peripherally associated AMPAR constituents. Alone or in combination, these auxiliary subunits control the gating and pharmacology of the AMPAR complex and profoundly impact their biogenesis and protein processing. Expressed in adult and fetal brain. Very weak expression in medulla, spinal cord and in adult ovary.

It is found in the cell membrane. It localises to the synapse. Important modulator of glutamate signaling pathway. This chain is DOMON domain-containing protein FRRS1L (FRRS1L), found in Homo sapiens (Human).